Here is a 470-residue protein sequence, read N- to C-terminus: Glutamate--tRNA ligase (470 aa).

Positions 12–22 (PSPTGIFHVGG) match the 'HIGH' region motif. Residues C103, C105, C125, and D127 each contribute to the Zn(2+) site. Positions 236–240 (KLSKR) match the 'KMSKS' region motif. K239 lines the ATP pocket.

It belongs to the class-I aminoacyl-tRNA synthetase family. Glutamate--tRNA ligase type 1 subfamily. As to quaternary structure, monomer. Requires Zn(2+) as cofactor.

The protein resides in the cytoplasm. The catalysed reaction is tRNA(Glu) + L-glutamate + ATP = L-glutamyl-tRNA(Glu) + AMP + diphosphate. Its function is as follows. Catalyzes the attachment of glutamate to tRNA(Glu) in a two-step reaction: glutamate is first activated by ATP to form Glu-AMP and then transferred to the acceptor end of tRNA(Glu). This is Glutamate--tRNA ligase from Frankia casuarinae (strain DSM 45818 / CECT 9043 / HFP020203 / CcI3).